The sequence spans 178 residues: FMN reductase (NADH) RutF (178 aa).

This sequence belongs to the non-flavoprotein flavin reductase family. RutF subfamily.

It carries out the reaction FMNH2 + NAD(+) = FMN + NADH + 2 H(+). Catalyzes the reduction of FMN to FMNH2 which is used to reduce pyrimidine by RutA via the Rut pathway. The polypeptide is FMN reductase (NADH) RutF (Pseudomonas syringae pv. syringae (strain B728a)).